The chain runs to 369 residues: Virulence factor-related M protein (369 aa).

The first 41 residues, 1 to 41, serve as a signal peptide directing secretion; it reads MARQQTKKNYSLRKLKTGTASVAVALTVLGAGFANQTEVRA. C repeat units follow at residues 120-154, 162-196, and 211-246; these read AKATKENEISEASRKGLSRDLEASRAAKKELEAKH, KKLTEANQVSEASRKGLSNDLEASRAAKKELEAKY, and QKLEADLPKFQRPSRKGLSRDLEASREANKKVTSEL. 4 stretches are compositionally biased toward basic and acidic residues: residues 125 to 165, 202 to 219, 228 to 243, and 257 to 271; these read ENEI…KKLT, DHQALEAKHQKLEADLPK, LSRDLEASREANKKVT, and EESKKLSEKEKAELQ. 2 disordered regions span residues 125–189 and 202–271; these read ENEI…RAAK and DHQA…AELQ. Residues 129-200 form a 2 X repeats, type A region; that stretch reads SEASRKGLSR…ELEAKYQKLE (72 aa). The segment at 132-241 is 3 X repeats, type B; that stretch reads SRKGLSRDLE…LEASREANKK (110 aa). 4 D repeats span residues 272-277, 278-283, 286-291, and 293-298; these read AKLDAQ, GKALKE, AKQTEE, and AKLRAE. Over residues 292 to 301 the composition is skewed to basic and acidic residues; that stretch reads LAKLRAEKAA. Residues 292 to 341 form a disordered region; that stretch reads LAKLRAEKAAGSKTPATKPANKERSGRAAQTATRPSQNKGMRSQLPSTGE. Residues 319 to 338 show a composition bias toward polar residues; it reads AAQTATRPSQNKGMRSQLPS. The LPXTG sorting signal motif lies at 336-340; sequence LPSTG. Thr-339 is subject to Pentaglycyl murein peptidoglycan amidated threonine. The propeptide at 340 to 369 is removed by sortase; it reads GEAANPFFTAAAATVMVSAGMLALKRKEEN.

The protein belongs to the M protein family.

The protein localises to the secreted. It localises to the cell wall. This chain is Virulence factor-related M protein (ennX), found in Streptococcus pyogenes serotype M49.